The chain runs to 252 residues: uncharacterized protein (252 aa).

The signal sequence occupies residues 1-20; the sequence is MIATLGNLIIPVIFVNYVAS.

This sequence belongs to the ascovirus HvAV ORF17 family.

This is an uncharacterized protein from Spodoptera frugiperda ascovirus 1a (SfAV-1a).